A 37-amino-acid chain; its full sequence is Potassium channel toxin alpha-KTx 1.11 (37 aa).

3 disulfides stabilise this stretch: C7–C28, C13–C33, and C17–C35.

Belongs to the short scorpion toxin superfamily. Potassium channel inhibitor family. Alpha-KTx 01 subfamily. In terms of tissue distribution, expressed by the venom gland.

Its subcellular location is the secreted. Functionally, reversibly blocks the high conductance calcium-activated potassium channels composed of only alpha subunits (KCa1.1/KCNMA1). Unreversibly blocks the high conductance calcium-activated potassium channels composed of alpha and beta1 subunits (KCNMA1 and KCNMB1). Unreversibly and weakly blocks the high conductance calcium-activated potassium channels composed of alpha and beta4 (KCNMA1 and KCNMB4). In Centruroides noxius (Mexican scorpion), this protein is Potassium channel toxin alpha-KTx 1.11.